A 1302-amino-acid polypeptide reads, in one-letter code: Vascular endothelial growth factor receptor kdr-like (1302 aa).

The first 28 residues, 1–28, serve as a signal peptide directing secretion; it reads MTPLKTSVKAFFTLHVLFSCISHGLVEG. Residues 29-740 are Extracellular-facing; sequence SRLPDPQLLP…GEDGKPNIEV (712 aa). Ig-like C2-type domains follow at residues 34–115, 143–206, 222–318, 326–412, 419–542, 545–636, and 643–728; these read PQLL…HEVS, DPYF…VDNA, KNLA…TKVI, NVTH…ISYK, PKIF…FYVD, PQPF…SALT, and PWLM…AVIT. Intrachain disulfides connect Cys55–Cys104 and Cys150–Cys199. N-linked (GlcNAc...) asparagine glycosylation is found at Asn69 and Asn97. N-linked (GlcNAc...) asparagine glycans are attached at residues Asn242, Asn265, Asn291, Asn326, Asn370, Asn380, Asn408, Asn453, Asn466, Asn505, Asn517, Asn532, Asn607, Asn611, Asn630, Asn648, and Asn655. A disulfide bridge connects residues Cys243 and Cys302. Cys444 and Cys524 are oxidised to a cystine. A disulfide bridge connects residues Cys565 and Cys618. Cys664 and Cys712 are joined by a disulfide. The helical transmembrane segment at 741–761 threads the bilayer; the sequence is IILVSTGAAATFLWIMLILFI. Over 762–1302 the chain is Cytoplasmic; it reads RKLRKPSSAD…YVVRYSTPPV (541 aa). The 331-residue stretch at 809–1139 folds into the Protein kinase domain; sequence LRLGKTLGHG…ELVERLGDLL (331 aa). Residues 815-823 and Lys843 each bind ATP; that span reads LGHGAFGKV. Asp1003 functions as the Proton acceptor in the catalytic mechanism. Phosphotyrosine; by autocatalysis occurs at positions 1029, 1034, and 1150. Disordered regions lie at residues 1159-1179 and 1266-1292; these read TKAD…PVSL and PLVP…PDYN. A compositionally biased stretch (polar residues) spans 1162–1176; the sequence is DPSNQSPTEETSTRP.

The protein belongs to the protein kinase superfamily. Tyr protein kinase family. CSF-1/PDGF receptor subfamily. Interacts with isoform VEGF165 of vegfaa and isoform VEGF171 of vegfab. In terms of processing, phosphorylated and activated by vegfaa and vegfab. First expressed in embryos between 5- and 7-somites. At 7 somites, expressed in discrete bilateral stripes both anteriorly and posteriorly, and in a transverse ectodermal stripe in the hindbrain. From 7-somites, expression seems to extend caudally from the head, and in both directions in the trunk region, until by 20-somites, expression is detected as a continuous band from the anterior head region to the tailbud. Concurrently, cells expressing kdrl in the mid- and posterior trunk regions converge medially. By 24 hours post-fertilization (hpf), expressed in all the endothelial cells lining the vasculature.

Its subcellular location is the cell membrane. It catalyses the reaction L-tyrosyl-[protein] + ATP = O-phospho-L-tyrosyl-[protein] + ADP + H(+). Its function is as follows. Receptor for VEGF or VEGFC. Has a tyrosine-protein kinase activity. Combinations of multiple VEGF receptors are required for development of different blood vessel types in the embryo. Involved in angiogenesis, specifically in VEGF-induced sprouting of new blood vessels. Particularly involved in artery formation. Does not appear to be required for hematopoiesis. The sequence is that of Vascular endothelial growth factor receptor kdr-like (kdrl) from Danio rerio (Zebrafish).